We begin with the raw amino-acid sequence, 453 residues long: L-cysteine:1D-myo-inositol 2-amino-2-deoxy-alpha-D-glucopyranoside ligase (453 aa).

Residue Cys58 participates in Zn(2+) binding. Residues 58 to 61 (CGIT), Thr73, and 96 to 98 (NVT) contribute to the L-cysteinyl-5'-AMP site. Residues 60–70 (ITPYDATHMGH) carry the 'HIGH' region motif. Residues 221 to 226 (ERGGDP) carry the 'ERGGDP' region motif. Trp262 contacts L-cysteinyl-5'-AMP. A Zn(2+)-binding site is contributed by Cys266. Residue 284-286 (GND) coordinates L-cysteinyl-5'-AMP. His291 contacts Zn(2+). Residue Val317 participates in L-cysteinyl-5'-AMP binding. Positions 323–327 (KMSKS) match the 'KMSKS' region motif.

It belongs to the class-I aminoacyl-tRNA synthetase family. MshC subfamily. As to quaternary structure, monomer. It depends on Zn(2+) as a cofactor.

The catalysed reaction is 1D-myo-inositol 2-amino-2-deoxy-alpha-D-glucopyranoside + L-cysteine + ATP = 1D-myo-inositol 2-(L-cysteinylamino)-2-deoxy-alpha-D-glucopyranoside + AMP + diphosphate + H(+). In terms of biological role, catalyzes the ATP-dependent condensation of GlcN-Ins and L-cysteine to form L-Cys-GlcN-Ins. In Rothia mucilaginosa (strain DY-18) (Stomatococcus mucilaginosus), this protein is L-cysteine:1D-myo-inositol 2-amino-2-deoxy-alpha-D-glucopyranoside ligase.